The following is a 155-amino-acid chain: Plastocyanin, chloroplastic (155 aa).

Residues 1 to 58 (MAALSSAAVSVPSFAAATPMRSSRSSRMVVRASLGKKAASAAVAMAAGAMLLGGSAMA) constitute a chloroplast transit peptide. Residues 59–155 (QDVLLGANGG…AGMVGKVTVN (97 aa)) enclose the Plastocyanin-like domain. Positions 95, 140, 143, and 148 each coordinate Cu cation.

Belongs to the plastocyanin family. Cu(2+) is required as a cofactor.

Its subcellular location is the plastid. It localises to the chloroplast thylakoid membrane. Functionally, participates in electron transfer between P700 and the cytochrome b6-f complex in photosystem I. The polypeptide is Plastocyanin, chloroplastic (PETE) (Hordeum vulgare (Barley)).